The primary structure comprises 114 residues: UPF0060 membrane protein GDI3492/Gdia_2889 (114 aa).

4 helical membrane passes run Phe-8–Trp-28, Ala-35–Val-55, Phe-64–Gly-84, and Ala-92–Ala-112.

It belongs to the UPF0060 family.

It localises to the cell inner membrane. This Gluconacetobacter diazotrophicus (strain ATCC 49037 / DSM 5601 / CCUG 37298 / CIP 103539 / LMG 7603 / PAl5) protein is UPF0060 membrane protein GDI3492/Gdia_2889.